Here is a 774-residue protein sequence, read N- to C-terminus: MGPIPSTRRLTGTPHSFISRRAPPECMWYVCMFANLEITFYDSGVPVYEMVCRDVAVMRRRSDAYLNATQILKVAGFDKPQRTRVLEREVQKGEHEKVQGGYGKYQGTWIPIERGLALAKQYGVEDILRPIIDYVPTSVSPPPAPKHSVAPPSKARRDKEKETGRTKATPSRTGPTSAAALQAQAQLNRAKMHDSTPDADASFRSFEERVSLTPEDDSSSDTPSPVASVMTDQDMEVDKMGMHMNMPNVTLSQNMEELGAGSRKRSAAMMMEDEDQFGHLRSVRGNSAVHTPHGTPRHLGIGMPPEPIGPEQYTDIILNYFVSETSQIPSILVSPPHDFDPNAPIDDDGHTALHWACAMGRVRVVKLLLTAGASIFAGNNAEQTPLMRSVMFSNNYDMRKFPELYELLHRSTLNIDKQNRTVFHHIANLALTKGKTHAAKYYMETILARLADYPQELADVINFQDEEGETALTIAARARSRRLVKALLDHGANPKIKNRDSRSAEDYILEDERFRSSPVPAPNGGVGKVSTSAAAEKPIFAPQLYFSEAARLCGGQALTDITSHMQSLARSFDAELQGKERDILQAKALLTNIHTEVTENGRSITAITNQAAPLEEKRHELESLQASLKTKVKDALKKGYIGWLEGELIREQRWEKGELEGNEEEKAAVQALRDVPTGGQEVVQAEEEKLRWEIEEKRKRRAMFVEKFVRAQAEAGTSEQIAKYRKLVSAGLGGVSTNEVDELMNQLLEGLEEENDNQVYNTSAGESGPSSWVQ.

One can recognise an HTH APSES-type domain in the interval 37–143; that stretch reads EITFYDSGVP…YVPTSVSPPP (107 aa). A DNA-binding region (H-T-H motif) is located at residues 68-89; the sequence is ATQILKVAGFDKPQRTRVLERE. Disordered regions lie at residues 135–180 and 209–229; these read VPTS…SAAA and RVSLTPEDDSSSDTPSPVASV. Positions 155 to 165 are enriched in basic and acidic residues; that stretch reads ARRDKEKETGR. Over residues 166 to 176 the composition is skewed to polar residues; that stretch reads TKATPSRTGPT. ANK repeat units lie at residues 348-377 and 467-496; these read DGHTALHWACAMGRVRVVKLLLTAGASIFA and EGETALTIAARARSRRLVKALLDHGANPKI. Residues 752 to 774 form a disordered region; that stretch reads EEENDNQVYNTSAGESGPSSWVQ. Over residues 757-774 the composition is skewed to polar residues; sequence NQVYNTSAGESGPSSWVQ.

The protein resides in the nucleus. Transcription factor that positively regulates ergosterol biosynthesis and thereby affects polyene and azole drug susceptibility. Plays a role in maintenance of membrane stability and osmotic stress response. Involved in genotoxic and oxidative stress responses. Also promotes production of melanin and capsule and thereby is required for full virulence. The chain is Transcription factor MBS1 from Cryptococcus neoformans var. grubii serotype A (strain H99 / ATCC 208821 / CBS 10515 / FGSC 9487) (Filobasidiella neoformans var. grubii).